A 261-amino-acid polypeptide reads, in one-letter code: Cytochrome c oxidase subunit 3 (261 aa).

Over 1 to 15 (MAHQAHAYHMVDPSP) the chain is Mitochondrial matrix. Residues 16–34 (WPLTGAIAALLLTSGTAVW) form a helical membrane-spanning segment. At 35–40 (FHFHSL) the chain is on the mitochondrial intermembrane side. Residues 41–66 (TLLTMGNILLLLTMYQWWRDIIREGT) form a helical membrane-spanning segment. Over 67–72 (FQGHHT) the chain is Mitochondrial matrix. A helical transmembrane segment spans residues 73-105 (PPVQKGLRYGMILFITSEVFFFLGFFWAFYHSS). The Mitochondrial intermembrane segment spans residues 106-128 (LSPTPELGGCWPPTGIITLDPFE). Residues 129-152 (VPLLNTAVLLASGVTVTWAHHSIM) traverse the membrane as a helical segment. Over 153 to 155 (EGE) the chain is Mitochondrial matrix. Residues 156–183 (RKQTIQALTLTILLGFYFTFLQGMEYYE) form a helical membrane-spanning segment. At 184 to 190 (APFTIAD) the chain is on the mitochondrial intermembrane side. Residues 191–223 (GVYGSTFFVATGFHGLHVIIGSTFLAICLLRQI) traverse the membrane as a helical segment. Residues 224-232 (QYHFTSEHH) are Mitochondrial matrix-facing. Residues 233 to 256 (FGFEAAAWYWHFVDVVWLFLYVSI) form a helical membrane-spanning segment. Residues 257-261 (YWWGS) lie on the Mitochondrial intermembrane side of the membrane.

The protein belongs to the cytochrome c oxidase subunit 3 family. As to quaternary structure, component of the cytochrome c oxidase (complex IV, CIV), a multisubunit enzyme composed of 14 subunits. The complex is composed of a catalytic core of 3 subunits MT-CO1, MT-CO2 and MT-CO3, encoded in the mitochondrial DNA, and 11 supernumerary subunits COX4I, COX5A, COX5B, COX6A, COX6B, COX6C, COX7A, COX7B, COX7C, COX8 and NDUFA4, which are encoded in the nuclear genome. The complex exists as a monomer or a dimer and forms supercomplexes (SCs) in the inner mitochondrial membrane with NADH-ubiquinone oxidoreductase (complex I, CI) and ubiquinol-cytochrome c oxidoreductase (cytochrome b-c1 complex, complex III, CIII), resulting in different assemblies (supercomplex SCI(1)III(2)IV(1) and megacomplex MCI(2)III(2)IV(2)).

The protein localises to the mitochondrion inner membrane. The catalysed reaction is 4 Fe(II)-[cytochrome c] + O2 + 8 H(+)(in) = 4 Fe(III)-[cytochrome c] + 2 H2O + 4 H(+)(out). Component of the cytochrome c oxidase, the last enzyme in the mitochondrial electron transport chain which drives oxidative phosphorylation. The respiratory chain contains 3 multisubunit complexes succinate dehydrogenase (complex II, CII), ubiquinol-cytochrome c oxidoreductase (cytochrome b-c1 complex, complex III, CIII) and cytochrome c oxidase (complex IV, CIV), that cooperate to transfer electrons derived from NADH and succinate to molecular oxygen, creating an electrochemical gradient over the inner membrane that drives transmembrane transport and the ATP synthase. Cytochrome c oxidase is the component of the respiratory chain that catalyzes the reduction of oxygen to water. Electrons originating from reduced cytochrome c in the intermembrane space (IMS) are transferred via the dinuclear copper A center (CU(A)) of subunit 2 and heme A of subunit 1 to the active site in subunit 1, a binuclear center (BNC) formed by heme A3 and copper B (CU(B)). The BNC reduces molecular oxygen to 2 water molecules using 4 electrons from cytochrome c in the IMS and 4 protons from the mitochondrial matrix. The sequence is that of Cytochrome c oxidase subunit 3 (mt-co3) from Salmo salar (Atlantic salmon).